Consider the following 138-residue polypeptide: Cysteine desulfuration protein SufE (138 aa).

Residue C51 is the Cysteine persulfide intermediate of the active site.

Belongs to the SufE family. In terms of assembly, homodimer. Interacts with SufS.

The protein resides in the cytoplasm. The protein operates within cofactor biosynthesis; iron-sulfur cluster biosynthesis. Its function is as follows. Participates in cysteine desulfuration mediated by SufS. Cysteine desulfuration mobilizes sulfur from L-cysteine to yield L-alanine and constitutes an essential step in sulfur metabolism for biosynthesis of a variety of sulfur-containing biomolecules. Functions as a sulfur acceptor for SufS, by mediating the direct transfer of the sulfur atom from the S-sulfanylcysteine of SufS, an intermediate product of cysteine desulfuration process. This is Cysteine desulfuration protein SufE from Salmonella agona (strain SL483).